Reading from the N-terminus, the 154-residue chain is Protein X (154 aa).

The tract at residues 28–48 (RPLPGPLGTLPPASPPAVPTD) is disordered. The interval 68-117 (PCALRFTSARRMETTVNAHGNLPKVLHKRTLGLSAMSTTDLEAYFKDCVF) is mitochondrial targeting sequence.

This sequence belongs to the orthohepadnavirus protein X family. May form homodimer. May interact with host CEBPA, CFLAR, CREB1, DDB1, E4F1, HBXIP, HSPD1/HSP60, NFKBIA, POLR2E and SMAD4. Interacts with host SMC5-SMC6 complex and induces its degradation. Interacts with host TRPC4AP; leading to prevent ubiquitination of TRPC4AP. Interacts with host PLSCR1; this interaction promotes ubiquitination and degradation of HBx and impairs HBx-mediated cell proliferation. A fraction may be phosphorylated in insect cells and HepG2 cells, a human hepatoblastoma cell line. Phosphorylated in vitro by host protein kinase C or mitogen-activated protein kinase. N-acetylated in insect cells.

The protein localises to the host cytoplasm. It is found in the host nucleus. Its subcellular location is the host mitochondrion. Multifunctional protein that plays a role in silencing host antiviral defenses and promoting viral transcription. Does not seem to be essential for HBV infection. May be directly involved in development of cirrhosis and liver cancer (hepatocellular carcinoma). Most of cytosolic activities involve modulation of cytosolic calcium. The effect on apoptosis is controversial depending on the cell types in which the studies have been conducted. May induce apoptosis by localizing in mitochondria and causing loss of mitochondrial membrane potential. May also modulate apoptosis by binding host CFLAR, a key regulator of the death-inducing signaling complex (DISC). Promotes viral transcription by using the host E3 ubiquitin ligase DDB1 to target the SMC5-SMC6 complex to proteasomal degradation. This host complex would otherwise bind to viral episomal DNA, and prevents its transcription. Moderately stimulates transcription of many different viral and cellular transcription elements. Promoters and enhancers stimulated by HBx contain DNA binding sites for NF-kappa-B, AP-1, AP-2, c-EBP, ATF/CREB, or the calcium-activated factor NF-AT. The protein is Protein X of Hepatitis B virus genotype B2 subtype adw (isolate China/patient4/1996) (HBV-B).